Reading from the N-terminus, the 297-residue chain is Guanylate kinase (297 aa).

The Guanylate kinase-like domain occupies 4 to 183 (GKMIIISGPS…AVAKITDVLH (180 aa)). ATP is bound at residue 11–18 (GPSGVGKG). Residues 204-297 (EQIVKEKYMY…EQKHYNNDEF (94 aa)) form a unknown region.

It belongs to the guanylate kinase family.

Its subcellular location is the cytoplasm. It carries out the reaction GMP + ATP = GDP + ADP. Its function is as follows. Essential for recycling GMP and indirectly, cGMP. The polypeptide is Guanylate kinase (gmk) (Mycoplasma mycoides subsp. mycoides SC (strain CCUG 32753 / NCTC 10114 / PG1)).